The primary structure comprises 504 residues: Histidine ammonia-lyase (504 aa).

Residues 141 to 143 constitute a cross-link (5-imidazolinone (Ala-Gly)); sequence ASG. Serine 142 is modified (2,3-didehydroalanine (Ser)).

This sequence belongs to the PAL/histidase family. Contains an active site 4-methylidene-imidazol-5-one (MIO), which is formed autocatalytically by cyclization and dehydration of residues Ala-Ser-Gly.

It is found in the cytoplasm. It carries out the reaction L-histidine = trans-urocanate + NH4(+). It functions in the pathway amino-acid degradation; L-histidine degradation into L-glutamate; N-formimidoyl-L-glutamate from L-histidine: step 1/3. The protein is Histidine ammonia-lyase of Geobacillus thermodenitrificans (strain NG80-2).